We begin with the raw amino-acid sequence, 104 residues long: Nucleoid-associated protein jk2011 (104 aa).

The protein belongs to the YbaB/EbfC family. As to quaternary structure, homodimer.

It localises to the cytoplasm. It is found in the nucleoid. Functionally, binds to DNA and alters its conformation. May be involved in regulation of gene expression, nucleoid organization and DNA protection. This chain is Nucleoid-associated protein jk2011, found in Corynebacterium jeikeium (strain K411).